Here is a 200-residue protein sequence, read N- to C-terminus: Holliday junction resolvase RecU (200 aa).

The disordered stretch occupies residues 1–25 (MTIRYPNGKRYNQASQPHKTPIKKH). Residues threonine 85, aspartate 87, glutamate 100, and glutamine 119 each contribute to the Mg(2+) site.

It belongs to the RecU family. Mg(2+) serves as cofactor.

The protein resides in the cytoplasm. It catalyses the reaction Endonucleolytic cleavage at a junction such as a reciprocal single-stranded crossover between two homologous DNA duplexes (Holliday junction).. Its function is as follows. Endonuclease that resolves Holliday junction intermediates in genetic recombination. Cleaves mobile four-strand junctions by introducing symmetrical nicks in paired strands. Promotes annealing of linear ssDNA with homologous dsDNA. Required for DNA repair, homologous recombination and chromosome segregation. The chain is Holliday junction resolvase RecU from Bacillus thuringiensis (strain Al Hakam).